Consider the following 269-residue polypeptide: Putative 6-phosphogluconolactonase (269 aa).

The tract at residues 248 to 269 is disordered; sequence DAATGVPDRDSSDSDSPPPFDG.

The protein belongs to the glucosamine/galactosamine-6-phosphate isomerase family. 6-phosphogluconolactonase subfamily.

The protein resides in the nucleus. The enzyme catalyses 6-phospho-D-glucono-1,5-lactone + H2O = 6-phospho-D-gluconate + H(+). It participates in carbohydrate degradation; pentose phosphate pathway; D-ribulose 5-phosphate from D-glucose 6-phosphate (oxidative stage): step 2/3. Functionally, hydrolysis of 6-phosphogluconolactone to 6-phosphogluconate. The sequence is that of Putative 6-phosphogluconolactonase from Caenorhabditis elegans.